The chain runs to 210 residues: MKKGILGRKHGMTQIFDEKGEVIPVTVIEAGPCVVVQKKTVETDGYNAIQVGFGDVKEKRLTKPLIGHFKKAGVPFKRYLREFRLDDISGYEVGSEIKVDIFKPGDRVDVTGISKGKGFAGVVKRYGANRGPMSHGSKYHRRVGSMGATTDPGRTFKGKIMPGHMGHERVTIQNLEVVKVDPELNLLLVKGSVPGPKGSLLIIKDSVKSK.

The disordered stretch occupies residues 131–154; it reads GPMSHGSKYHRRVGSMGATTDPGR.

It belongs to the universal ribosomal protein uL3 family. Part of the 50S ribosomal subunit. Forms a cluster with proteins L14 and L19.

In terms of biological role, one of the primary rRNA binding proteins, it binds directly near the 3'-end of the 23S rRNA, where it nucleates assembly of the 50S subunit. In Thermoanaerobacter pseudethanolicus (strain ATCC 33223 / 39E) (Clostridium thermohydrosulfuricum), this protein is Large ribosomal subunit protein uL3.